A 200-amino-acid polypeptide reads, in one-letter code: Lipopolysaccharide core heptose(II)-phosphate phosphatase (200 aa).

A signal peptide spans 1–25 (MLAFCRSSLKSKKYFIILLALAAIA).

Belongs to the phosphoglycerate mutase family. Ais subfamily.

The protein resides in the periplasm. Its pathway is bacterial outer membrane biogenesis; lipopolysaccharide metabolism. Catalyzes the dephosphorylation of heptose(II) of the outer membrane lipopolysaccharide core. This Escherichia coli (strain SE11) protein is Lipopolysaccharide core heptose(II)-phosphate phosphatase.